Reading from the N-terminus, the 273-residue chain is Undecaprenyl-diphosphatase (273 aa).

7 helical membrane-spanning segments follow: residues 6–26, 45–65, 90–110, 116–136, 190–210, 222–242, and 252–272; these read SLLI…LPVS, AKTF…VMFW, LTLI…LVFH, LFNP…LIAA, YAAS…ATVL, ADIP…LIAI, and ISFI…YVVF.

This sequence belongs to the UppP family.

Its subcellular location is the cell inner membrane. The catalysed reaction is di-trans,octa-cis-undecaprenyl diphosphate + H2O = di-trans,octa-cis-undecaprenyl phosphate + phosphate + H(+). Its function is as follows. Catalyzes the dephosphorylation of undecaprenyl diphosphate (UPP). Confers resistance to bacitracin. This Salmonella arizonae (strain ATCC BAA-731 / CDC346-86 / RSK2980) protein is Undecaprenyl-diphosphatase.